The primary structure comprises 337 residues: MNKLLLLILFECIIFLSCSGKGSLESEIPKVSLIIDGTFDDKSFNESALNGIKKVKEEFKIEPVLKESSTNSYLSDLEGLKDTGSNLIWLIGYKFSDVAKSVSLQNPEIKYAIIDPVYSDEPIPANLVGMTFRSQEGAFLTGYIAAKVSKTGKIGFLGGIEGEIVDAFRYGYEAGAKYANKDIKISAYYIGSFADLEAGRSVATKMYSDGIDIIHHAAGLGGIGAIEVAKELGSGHYIIGVDGDQSYLAPNNIITSATKDVGRSLNIFTSNYLKTNTFEGGRLINYGLKEGVVGFIKNPKMIPFELEKEIDNLSSKIINQEIIVPYNKESYEKFIKE.

Residues 1–17 form the signal peptide; sequence MNKLLLLILFECIIFLS. Residue Cys18 is the site of N-palmitoyl cysteine attachment. Cys18 carries the S-diacylglycerol cysteine lipid modification.

It belongs to the BMP lipoprotein family. Monomer.

It is found in the cell inner membrane. Its function is as follows. Immunogenic protein. May be part of an ABC-type nucleoside uptake system involved in the purine salvage pathway. This Borrelia garinii subsp. bavariensis (strain ATCC BAA-2496 / DSM 23469 / PBi) (Borreliella bavariensis) protein is Basic membrane protein A1 (bmpA1).